Consider the following 474-residue polypeptide: uncharacterized protein (474 aa).

The helical transmembrane segment at 374-398 (GLICYLALFSISLMIENIIGLTISL) threads the bilayer.

It is found in the membrane. This is an uncharacterized protein from Borreliella burgdorferi (strain ATCC 35210 / DSM 4680 / CIP 102532 / B31) (Borrelia burgdorferi).